Reading from the N-terminus, the 392-residue chain is ATP phosphoribosyltransferase regulatory subunit (392 aa).

This sequence belongs to the class-II aminoacyl-tRNA synthetase family. HisZ subfamily. As to quaternary structure, heteromultimer composed of HisG and HisZ subunits.

Its subcellular location is the cytoplasm. It functions in the pathway amino-acid biosynthesis; L-histidine biosynthesis; L-histidine from 5-phospho-alpha-D-ribose 1-diphosphate: step 1/9. In terms of biological role, required for the first step of histidine biosynthesis. May allow the feedback regulation of ATP phosphoribosyltransferase activity by histidine. The protein is ATP phosphoribosyltransferase regulatory subunit of Geobacillus sp. (strain WCH70).